A 199-amino-acid chain; its full sequence is NADH-quinone oxidoreductase subunit I (199 aa).

4Fe-4S ferredoxin-type domains are found at residues 45–75 (LNRH…VEGA) and 91–120 (RVYQ…MSNE). Positions 55, 58, 61, 65, 100, 103, 106, and 110 each coordinate [4Fe-4S] cluster. Positions 164–199 (GTPAAHMLSGEDDAASETTLDRSDDHSATYEEAERP) are disordered. The segment covering 182 to 199 (TLDRSDDHSATYEEAERP) has biased composition (basic and acidic residues).

This sequence belongs to the complex I 23 kDa subunit family. In terms of assembly, NDH-1 is composed of 14 different subunits. Subunits NuoA, H, J, K, L, M, N constitute the membrane sector of the complex. It depends on [4Fe-4S] cluster as a cofactor.

It is found in the cell membrane. The enzyme catalyses a quinone + NADH + 5 H(+)(in) = a quinol + NAD(+) + 4 H(+)(out). In terms of biological role, NDH-1 shuttles electrons from NADH, via FMN and iron-sulfur (Fe-S) centers, to quinones in the respiratory chain. The immediate electron acceptor for the enzyme in this species is believed to be ubiquinone. Couples the redox reaction to proton translocation (for every two electrons transferred, four hydrogen ions are translocated across the cytoplasmic membrane), and thus conserves the redox energy in a proton gradient. In Acidothermus cellulolyticus (strain ATCC 43068 / DSM 8971 / 11B), this protein is NADH-quinone oxidoreductase subunit I.